A 649-amino-acid polypeptide reads, in one-letter code: Replication protein E1 (649 aa).

Positions 83–85 (KRK) match the Nuclear localization signal motif. Ser89, Ser93, and Ser107 each carry phosphoserine; by host. The Nuclear export signal signature appears at 106 to 115 (ISPRLDAIKL). A disordered region spans residues 138-169 (GYSEVEAGTGTQVEKHGVPENGGDGQEKDTGR). The tract at residues 187 to 353 (REHAGTAGIL…QTVIEHGLAD (167 aa)) is DNA-binding region. An SF3 helicase domain is found at 452–602 (IEFIPFLSKF…FPFDRNGNAV (151 aa)). 478–485 (GPPDTGKS) is a binding site for ATP. A Glycyl lysine isopeptide (Lys-Gly) (interchain with G-Cter in SUMO) cross-link involves residue Lys559.

It belongs to the papillomaviridae E1 protein family. Can form hexamers. Interacts with E2 protein; this interaction increases E1 DNA binding specificity. Interacts with host DNA polymerase subunit POLA2. Interacts with host single stranded DNA-binding protein RPA1. Interacts with host TOP1; this interaction stimulates the enzymatic activity of TOP1. Phosphorylated. Post-translationally, sumoylated.

It is found in the host nucleus. The enzyme catalyses Couples ATP hydrolysis with the unwinding of duplex DNA by translocating in the 3'-5' direction.. It carries out the reaction ATP + H2O = ADP + phosphate + H(+). In terms of biological role, ATP-dependent DNA 3'-5' helicase required for initiation of viral DNA replication. It forms a complex with the viral E2 protein. The E1-E2 complex binds to the replication origin which contains binding sites for both proteins. During the initial step, a dimer of E1 interacts with a dimer of protein E2 leading to a complex that binds the viral origin of replication with high specificity. Then, a second dimer of E1 displaces the E2 dimer in an ATP-dependent manner to form the E1 tetramer. Following this, two E1 monomers are added to each half of the site, which results in the formation of two E1 trimers on the viral ori. Subsequently, two hexamers will be created. The double hexamer acts as a bi-directional helicase machinery and unwinds the viral DNA and then recruits the host DNA polymerase to start replication. The polypeptide is Replication protein E1 (Homo sapiens (Human)).